A 698-amino-acid polypeptide reads, in one-letter code: DNA ligase (698 aa).

Residues 40 to 44 (DDVYD), 89 to 90 (SL), and Glu-123 contribute to the NAD(+) site. Catalysis depends on Lys-125, which acts as the N6-AMP-lysine intermediate. The NAD(+) site is built by Arg-146, Glu-184, Lys-300, and Lys-324. The Zn(2+) site is built by Cys-417, Cys-420, Cys-435, and Cys-441. Residues 618-698 (SSASPVAGKA…EWLALTGAAD (81 aa)) enclose the BRCT domain.

It belongs to the NAD-dependent DNA ligase family. LigA subfamily. The cofactor is Mg(2+). Requires Mn(2+) as cofactor.

The catalysed reaction is NAD(+) + (deoxyribonucleotide)n-3'-hydroxyl + 5'-phospho-(deoxyribonucleotide)m = (deoxyribonucleotide)n+m + AMP + beta-nicotinamide D-nucleotide.. Functionally, DNA ligase that catalyzes the formation of phosphodiester linkages between 5'-phosphoryl and 3'-hydroxyl groups in double-stranded DNA using NAD as a coenzyme and as the energy source for the reaction. It is essential for DNA replication and repair of damaged DNA. The protein is DNA ligase of Paramagnetospirillum magneticum (strain ATCC 700264 / AMB-1) (Magnetospirillum magneticum).